The following is a 71-amino-acid chain: MKKGIHPEMKLVTVKCACGAEHTFYTTVDNIRIDVCSKCHPFYTSGGKGGVLIVDTEGRVEKFRRKYGDNY.

Positions 16, 18, 36, and 39 each coordinate Zn(2+).

Belongs to the bacterial ribosomal protein bL31 family. Type A subfamily. As to quaternary structure, part of the 50S ribosomal subunit. It depends on Zn(2+) as a cofactor.

Its function is as follows. Binds the 23S rRNA. This chain is Large ribosomal subunit protein bL31, found in Thermotoga sp. (strain RQ2).